The following is a 208-amino-acid chain: Imidazole glycerol phosphate synthase subunit HisH (208 aa).

The 206-residue stretch at 1 to 206 (MIVIIDYDTG…KEVTESCKSS (206 aa)) folds into the Glutamine amidotransferase type-1 domain. Catalysis depends on cysteine 79, which acts as the Nucleophile. Active-site residues include histidine 181 and glutamate 183.

In terms of assembly, heterodimer of HisH and HisF.

It localises to the cytoplasm. The enzyme catalyses 5-[(5-phospho-1-deoxy-D-ribulos-1-ylimino)methylamino]-1-(5-phospho-beta-D-ribosyl)imidazole-4-carboxamide + L-glutamine = D-erythro-1-(imidazol-4-yl)glycerol 3-phosphate + 5-amino-1-(5-phospho-beta-D-ribosyl)imidazole-4-carboxamide + L-glutamate + H(+). It carries out the reaction L-glutamine + H2O = L-glutamate + NH4(+). It participates in amino-acid biosynthesis; L-histidine biosynthesis; L-histidine from 5-phospho-alpha-D-ribose 1-diphosphate: step 5/9. Functionally, IGPS catalyzes the conversion of PRFAR and glutamine to IGP, AICAR and glutamate. The HisH subunit catalyzes the hydrolysis of glutamine to glutamate and ammonia as part of the synthesis of IGP and AICAR. The resulting ammonia molecule is channeled to the active site of HisF. The protein is Imidazole glycerol phosphate synthase subunit HisH of Listeria innocua serovar 6a (strain ATCC BAA-680 / CLIP 11262).